We begin with the raw amino-acid sequence, 343 residues long: MKIKALSKLKPEEGIWLTEVEKPEMGHNDLLIRIKKTAICGTDVHIYNWDEWSQKTIPVPMVVGHEYVGEVVGIGQEVRGFEIGDRVSGEGHITCGHCRNCRGGRTHLCRNTTGVGVNRTGAFSEYLVIPAFNAFKIPAGISDDLASIFDPFGNAVHTALSFDLVGEDVLITGAGPIGIMAAAVAKHVGARHVVITDVNEYRLDLAKKMGVTRAVNVMNEKLEDVMSDLGMTEGFDVGLEMSGNPSAFNSMLTNMNHGGKISLLGIPPSDMTVDWNQVIFKGLVIKGIYGREMFETWYKMASLIQSGLDLTPIITHHYKIDDFQKGFDMMRSGMSGKVILDWE.

Cys-40 serves as a coordination point for Zn(2+). Residues Thr-42 and His-45 each act as charge relay system in the active site. Zn(2+) is bound by residues His-65, Glu-66, Cys-95, Cys-98, Cys-101, and Cys-109. Residues Ile-177, Asp-197, Arg-202, 264-266, and 288-289 contribute to the NAD(+) site; these read LGI and IY.

It belongs to the zinc-containing alcohol dehydrogenase family. Homotetramer. Zn(2+) is required as a cofactor.

Its subcellular location is the cytoplasm. It catalyses the reaction L-threonine + NAD(+) = (2S)-2-amino-3-oxobutanoate + NADH + H(+). It participates in amino-acid degradation; L-threonine degradation via oxydo-reductase pathway; glycine from L-threonine: step 1/2. In terms of biological role, catalyzes the NAD(+)-dependent oxidation of L-threonine to 2-amino-3-ketobutyrate. The sequence is that of L-threonine 3-dehydrogenase from Aliivibrio fischeri (strain MJ11) (Vibrio fischeri).